Reading from the N-terminus, the 128-residue chain is uncharacterized protein (128 aa).

The segment at 24-43 (KRTQNNTEQASRAINSPLQS) is disordered. A compositionally biased stretch (polar residues) spans 26-43 (TQNNTEQASRAINSPLQS).

This is an uncharacterized protein from Homo sapiens (Human).